We begin with the raw amino-acid sequence, 47 residues long: uncharacterized protein (47 aa).

A disordered region spans residues 19-47 (EKVLKNQNPDRLSHMTDKNAQPKSKEKEE).

This is an uncharacterized protein from Bacillus subtilis (strain 168).